The following is a 548-amino-acid chain: Leucine-rich repeat LGI family member 3 (548 aa).

Positions Met1–Ala30 are cleaved as a signal peptide. An LRRNT domain is found at Lys31–Ser64. 3 LRR repeats span residues Leu89–Gly110, His113–Gly134, and Ser137–Pro158. The LRRCT domain maps to Asn170–Thr220. Asn189 carries an N-linked (GlcNAc...) asparagine glycan. EAR repeat units lie at residues Asp222 to Tyr264 and Gln268 to Pro310. Residue Asn311 is glycosylated (N-linked (GlcNAc...) asparagine). 5 EAR repeats span residues Arg314–Gln361, Gly363–Arg406, Gln410–Gly453, Arg455–Glu497, and Lys501–Val543.

Interacts with STX1A. As to expression, brain.

The protein resides in the secreted. Its subcellular location is the cytoplasmic vesicle. It is found in the secretory vesicle. It localises to the synaptic vesicle. The protein localises to the synapse. The protein resides in the synaptosome. Its subcellular location is the cell projection. It is found in the axon. Its function is as follows. May participate in the regulation of neuronal exocytosis. This is Leucine-rich repeat LGI family member 3 (Lgi3) from Mus musculus (Mouse).